A 206-amino-acid chain; its full sequence is MTVYKGIYTVGITGASGAQYGIRLVQEMKKKGYKVHLVITEAGWQVFREELLIQTDDRKMVIDELFAAGDGEVSFHQLDDYTAPIASGSYQNRGMIIIPCSMGTLSGIAQGASGNLLERTADVMLKEKRRLVIVPRETPLNQIHLENMLKLSKMGVTILPAMPGFYQLPKTMDDLIDFVVGKALDQLGIEHELFTRWGEERDNHSR.

FMN-binding positions include 14-16 (GAS), threonine 40, 101-104 (SMGT), and arginine 136. The dimethylallyl phosphate site is built by tyrosine 166 and lysine 182.

Belongs to the UbiX/PAD1 family.

It catalyses the reaction dimethylallyl phosphate + FMNH2 = prenylated FMNH2 + phosphate. Functionally, flavin prenyltransferase that catalyzes the synthesis of the prenylated FMN cofactor (prenyl-FMN) for 4-hydroxy-3-polyprenylbenzoic acid decarboxylase UbiD. The prenyltransferase is metal-independent and links a dimethylallyl moiety from dimethylallyl monophosphate (DMAP) to the flavin N5 and C6 atoms of FMN. This is Flavin prenyltransferase UbiX from Halalkalibacterium halodurans (strain ATCC BAA-125 / DSM 18197 / FERM 7344 / JCM 9153 / C-125) (Bacillus halodurans).